A 364-amino-acid chain; its full sequence is MPDSLDQQLSSYAYHLPPERIAQAPVEPRHDARLLIAPGQTDGVQAARHQKVWDLLEELRSGDLLVVNDTRVLKARIKVRRSGGGVSELLVLEPRGDGQWLCLARPAKRMRPGDLLTLDGTAITLRVLHEDPASGGRIVQFPLDCRDAESIEALLNQCGEVPLPPYIDRHDPGDAERYQTRYADRPGAVAAPTAGLHFSDELLAALQGKGVGLARITLHVGLGTFRPVETEDLTQLELHSEWIEVNASVVEAIQQCRGRVIAVGTTSVRALEGAAQLQGGVLKPFTGPVNLVIQPGYRFAVVQGLLTNFHLPKSSLLLLVSALIGREKLLALYAEAIDHEYRFFSYGDAMWISPDAVLPGVTPN.

It belongs to the QueA family. As to quaternary structure, monomer.

The protein localises to the cytoplasm. The catalysed reaction is 7-aminomethyl-7-carbaguanosine(34) in tRNA + S-adenosyl-L-methionine = epoxyqueuosine(34) in tRNA + adenine + L-methionine + 2 H(+). The protein operates within tRNA modification; tRNA-queuosine biosynthesis. Functionally, transfers and isomerizes the ribose moiety from AdoMet to the 7-aminomethyl group of 7-deazaguanine (preQ1-tRNA) to give epoxyqueuosine (oQ-tRNA). The protein is S-adenosylmethionine:tRNA ribosyltransferase-isomerase of Synechococcus sp. (strain CC9902).